The primary structure comprises 571 residues: Penton protein (571 aa).

The tract at residues 297-325 (KDDTEQGGGGAGGSNSSGSGAEENSNAAA) is disordered. Residues 302–311 (QGGGGAGGSN) show a composition bias toward gly residues. Residues 312–325 (SSGSGAEENSNAAA) show a composition bias toward low complexity. Positions 340–342 (RGD) match the Cell attachment site motif. The disordered stretch occupies residues 347–383 (RAEEKRAEAEAAAEAAAPAAQPEVEKPQKKPVIKPLT). Residues 356 to 368 (EAAAEAAAPAAQP) show a composition bias toward low complexity.

It belongs to the adenoviridae penton family. In terms of assembly, interacts (via the cell attachment site RGD) with host heterodimer ITGAV-ITGB5; this interaction promotes virus internalization. Interacts with host WWP1 and WWP2. Interacts with the fiber protein (via N-terminal tail region). Interacts with the capsid vertex protein; this interaction binds the penton base to neighboring peripentonal hexons.

It is found in the virion. It localises to the host nucleus. Functionally, major capsid protein that self-associates to form penton base pentamers, each in the shape of a pentagon, situated at the 12 vertices of the pseudo T=25 capsid. Involved in virus secondary attachment to host cell after initial attachment by the fiber protein. Binds host integrin heterodimer ITGAV-ITGB5 (alphaV-beta5) thereby triggering clathrin-mediated endocytosis of virions. Mediates initial virus attachment to CXADR-negative cells. Binding to integrins ITGAV-ITGB5 also seems to induce macropinocytosis uptake of the virus. As the virus enters the host cell, penton proteins are shed concomitant with virion acidification in the endosome. In Homo sapiens (Human), this protein is Penton protein.